The following is a 145-amino-acid chain: MYLLQISISLLLLISTAATALPLSTPLIPLLDTLINITITASTLNSAPPTALTTTTHSLECADVNQGALVCCPSIVDGDQPVVVMAAKMFGFVLNGNSVNGVGCRTIYNGAYCPVLEHRLCCQVTDLMVLPLVSLAMWCHRAEEL.

An N-terminal signal peptide occupies residues 1-20 (MYLLQISISLLLLISTAATA). The N-linked (GlcNAc...) asparagine glycan is linked to asparagine 36. Cystine bridges form between cysteine 61/cysteine 121, cysteine 71/cysteine 113, cysteine 72/cysteine 104, and cysteine 122/cysteine 139.

Its subcellular location is the secreted. The protein localises to the cell wall. In terms of biological role, aerial growth, conidiation, and dispersal of filamentous fungi in the environment rely upon a capability of their secreting small amphipathic proteins called hydrophobins (HPBs) with low sequence identity. Class I can self-assemble into an outermost layer of rodlet bundles on aerial cell surfaces, conferring cellular hydrophobicity that supports fungal growth, development and dispersal; whereas Class II form highly ordered films at water-air interfaces through intermolecular interactions but contribute nothing to the rodlet structure. In Botryotinia fuckeliana, hydrophobins are not involved in conferring surface hydrophobicity to conidia and aerial hyphae and their function in sclerotia and fruiting bodies remains to be investigated. This Botryotinia fuckeliana (strain B05.10) (Noble rot fungus) protein is Hydrophobin-like protein 1.